The sequence spans 114 residues: Prostate stem cell antigen (114 aa).

Residues 1-11 (MAGLALQPGTA) form the signal peptide. One can recognise a UPAR/Ly6 domain in the interval 12–86 (LLCYSCKAQV…CCDTDLCNAS (75 aa)). Disulfide bonds link Cys-14–Cys-39, Cys-17–Cys-26, Cys-32–Cys-57, Cys-61–Cys-77, and Cys-78–Cys-83. N-linked (GlcNAc...) asparagine glycosylation occurs at Asn-31. Ser-86 carries GPI-anchor amidated serine lipidation. The propeptide at 86–114 (SGAHALQPAAAILALLPALGLLLWGPGQL) is removed in mature form.

In terms of assembly, interacts with CHRNA4. Post-translationally, N-glycosylated. In terms of tissue distribution, highly expressed in prostate (basal, secretory and neuroendocrine epithelium cells). Also found in bladder (transitional epithelium), placenta (trophoblasts), stomach (neuroendocrine cells), colon (neuroendocrine cells) and kidney (collecting ducts). Overexpressed in prostate cancers and expression is correlated with tumor stage, grade and androgen-independence. Highly expressed in prostate cancer bone metastases. Expressed in gastric epithelial cells, mainly in the isthmus (at protein level). Not detected in normal intestinal epithelium (at protein level). Expressed in brain cortex; expression is significantly increased in the front cortex of Alzheimer disease patients.

It localises to the cell membrane. May be involved in the regulation of cell proliferation. Has a cell-proliferation inhibition activity in vitro. Its function is as follows. May act as a modulator of nicotinic acetylcholine receptors (nAChRs) activity. In vitro inhibits nicotine-induced signaling probably implicating alpha-3:beta-2- or alpha-7-containing nAChRs. This is Prostate stem cell antigen (PSCA) from Homo sapiens (Human).